The following is a 98-amino-acid chain: MLCGGTSQPVDADEQIQKICDSMKPHAEAQAGKTFDVFVAKTYTTQCVPGTNYFIKVHVGGDEHVHLRVYKKLPCNGETLELSKMLQDKRHHDPLEYF.

Residues 4-83 (GGTSQPVDAD…PCNGETLELS (80 aa)) enclose the Cystatin domain. Positions 46–50 (QCVPG) match the Secondary area of contact motif.

Belongs to the cystatin family. As to expression, ubiquitously expressed in normal and lipopolysaccharide (LPS)-stimulated tissues including brain, eye, gullet, heart, liver, muscle, stomach, kidney, spleen, pyloric ceca, intestine and gill.

Its subcellular location is the cytoplasm. Its activity is regulated as follows. Greatly decreased inhibitory activity against papain protease by metal ions including ZnSO(4), CuSO(4), HgCl(2) and CoCl(2). Decreased inhibitory activity against papain protease by detergents including Tween 20, SDS and Brij 35. In terms of biological role, thiol protease inhibitor. Has high papain, bovine cathepsin B and fish cathepsins F and X inhibitory activity and inhibits fish cathepsins L, S and K to a lesser extent in vitro. May be involved in innate immunity. The protein is Cystatin-B of Paralichthys olivaceus (Bastard halibut).